The following is a 447-amino-acid chain: Phosphoglucosamine mutase (447 aa).

Serine 106 serves as the catalytic Phosphoserine intermediate. Serine 106, aspartate 245, aspartate 247, and aspartate 249 together coordinate Mg(2+). Phosphoserine is present on serine 106.

Belongs to the phosphohexose mutase family. Mg(2+) is required as a cofactor. In terms of processing, activated by phosphorylation.

The catalysed reaction is alpha-D-glucosamine 1-phosphate = D-glucosamine 6-phosphate. Functionally, catalyzes the conversion of glucosamine-6-phosphate to glucosamine-1-phosphate. In Cupriavidus pinatubonensis (strain JMP 134 / LMG 1197) (Cupriavidus necator (strain JMP 134)), this protein is Phosphoglucosamine mutase.